We begin with the raw amino-acid sequence, 550 residues long: MISDNVKKGVIRSPNRALLKACGYSDEDMEKPFIGVVNSFTEVVPGHIHLKTLSEAVKHGVYANGGTPFEFNTIGICDGIAMGHEGMKYSLPSREIIADAVESMARAHGFDGLVLIPTCDKIVPGMIMGALRLNIPFIVVTGGPMLPGEFQGKKCELISLFEGVGEYQVGKITEEELKSIEECACPGAGSCAGLYTANSMACLTEALGLSLPMCATIHAVDAQKVRIAKKTGSKIVDLVKEDVKPTDILTKEAFENAILVDLALGGSTNTTLHIPAIANEIENKFITLDDFDRLSNEVPHIASIKPGGEHYMIDLHNAGGIPAVLNVLKGKIRDTKTVDGRSTLEIAESVKYINYDVIRKVEAPVHETAGLRVLKGNLAPNGCVVKIGAVNPKMYKHDGPAKVYNSEDEAISAILGGKIVEGDVIVIRYEGPSGGPGMREMLSPTSAICGMGLDDSVALITDGRFSGGSRGPCIGHVSPEAAAGGVIAAIENGDIIKIDMIGKEINVDLDESVIKERLSKLDEFEPKIKKGYLSRYSRLVSSADEGAVLK.

Aspartate 78 contributes to the Mg(2+) binding site. A [2Fe-2S] cluster-binding site is contributed by cysteine 119. Mg(2+) contacts are provided by aspartate 120 and lysine 121. Lysine 121 is subject to N6-carboxylysine. Cysteine 191 is a [2Fe-2S] cluster binding site. Glutamate 440 is a Mg(2+) binding site. The Proton acceptor role is filled by serine 466.

It belongs to the IlvD/Edd family. Homodimer. [2Fe-2S] cluster is required as a cofactor. Requires Mg(2+) as cofactor.

The enzyme catalyses (2R)-2,3-dihydroxy-3-methylbutanoate = 3-methyl-2-oxobutanoate + H2O. It catalyses the reaction (2R,3R)-2,3-dihydroxy-3-methylpentanoate = (S)-3-methyl-2-oxopentanoate + H2O. Its pathway is amino-acid biosynthesis; L-isoleucine biosynthesis; L-isoleucine from 2-oxobutanoate: step 3/4. The protein operates within amino-acid biosynthesis; L-valine biosynthesis; L-valine from pyruvate: step 3/4. Functionally, functions in the biosynthesis of branched-chain amino acids. Catalyzes the dehydration of (2R,3R)-2,3-dihydroxy-3-methylpentanoate (2,3-dihydroxy-3-methylvalerate) into 2-oxo-3-methylpentanoate (2-oxo-3-methylvalerate) and of (2R)-2,3-dihydroxy-3-methylbutanoate (2,3-dihydroxyisovalerate) into 2-oxo-3-methylbutanoate (2-oxoisovalerate), the penultimate precursor to L-isoleucine and L-valine, respectively. This Methanococcus maripaludis (strain C7 / ATCC BAA-1331) protein is Dihydroxy-acid dehydratase.